Here is a 133-residue protein sequence, read N- to C-terminus: Small ribosomal subunit protein uS8 (133 aa).

Belongs to the universal ribosomal protein uS8 family. In terms of assembly, part of the 30S ribosomal subunit.

In terms of biological role, one of the primary rRNA binding proteins, it binds directly to 16S rRNA central domain where it helps coordinate assembly of the platform of the 30S subunit. The chain is Small ribosomal subunit protein uS8 from Staphylothermus marinus (strain ATCC 43588 / DSM 3639 / JCM 9404 / F1).